Reading from the N-terminus, the 101-residue chain is Movement protein (101 aa).

Residues E30–L50 traverse the membrane as a helical segment. The tract at residues V75–G101 is disordered.

It belongs to the mastrevirus movement protein family. In terms of assembly, interacts with the capsid protein (CP). Part of a MP-CP-viral DNA complex.

The protein resides in the host membrane. In terms of biological role, involved in the viral transport within, and between cells. In Maize streak virus genotype A (isolate Kenya) (MSV), this protein is Movement protein.